The following is a 517-amino-acid chain: Protein IQ-DOMAIN 13 (517 aa).

The segment at 1 to 11 (MGKKGSWFSAI) is calmodulin-binding. 2 disordered regions span residues 1–60 (MGKK…FLPI) and 81–147 (VFRP…PRAV). The segment covering 40–49 (KKKKGFGKKL) has biased composition (basic residues). A compositionally biased stretch (polar residues) spans 89-99 (DRANSSSTSVA). The span at 134–144 (PKPPSPKPPSP) shows a compositional bias: pro residues. IQ domains follow at residues 168–196 (KNAY…GLVR) and 197–218 (LQGV…KYMQ). Disordered regions lie at residues 324–407 (QPFR…LTSC) and 425–452 (KLRA…SSFP). Residues 328-342 (LTPTRPSLSPQPQSS) show a composition bias toward low complexity. Over residues 343-367 (NQNHFRLNNSFDTSTPNSSKSTFVT) the composition is skewed to polar residues. Positions 432–448 (PKERMDRTPVSTNEKRR) are enriched in basic and acidic residues.

The protein belongs to the IQD family. As to quaternary structure, binds to multiple calmodulin (CaM) in the presence of Ca(2+) and CaM-like proteins. Expressed in vessels of roots, cotyledons and leaves, as well as in trichomes.

Its subcellular location is the cell membrane. The protein localises to the cytoplasm. The protein resides in the cytoskeleton. May be involved in cooperative interactions with calmodulins or calmodulin-like proteins. Recruits calmodulin proteins to microtubules, thus being a potential scaffold in cellular signaling and trafficking. Regulates the formation of oval xylem secondary cell-wall deposition pits through microtubule-dependent lateral inhibition of Rho GTPase domains, thus confining the area of active ROP domains within the lattice of the cortical microtubules. May associate with nucleic acids and regulate gene expression at the transcriptional or post-transcriptional level. In Arabidopsis thaliana (Mouse-ear cress), this protein is Protein IQ-DOMAIN 13.